A 209-amino-acid chain; its full sequence is Eukaryotic translation initiation factor 4E (209 aa).

It belongs to the eukaryotic initiation factor 4E family. EIF4F is a multi-subunit complex, the composition of which varies with external and internal environmental conditions. It is composed of at least eIF4A, eIF4E and eIF4G. eIF4E is also known to interact with other partners.

Recognizes and binds the 7-methylguanosine-containing mRNA cap during an early step in the initiation of protein synthesis and facilitates ribosome binding by inducing the unwinding of the mRNAs secondary structures. The protein is Eukaryotic translation initiation factor 4E (TIF45) of Candida glabrata (strain ATCC 2001 / BCRC 20586 / JCM 3761 / NBRC 0622 / NRRL Y-65 / CBS 138) (Yeast).